We begin with the raw amino-acid sequence, 1726 residues long: Probable serine/threonine-protein kinase roco4 (1726 aa).

4 LRR repeats span residues 256–277 (KGKRLSLSRSNLSRFPMSITQM), 280–301 (HLVELDLSDNKITELPKDIQLL), 303–324 (SLRILILRGNLLEDIPLEICYL), and 326–347 (DLKILELQENPLNNFPLSVVQS). In terms of domain architecture, Roc spans 364–544 (KSETWNKVKL…KRLIHEAEKS (181 aa)). GTP contacts are provided by residues 377-384 (GQEGVGKT), 428-432 (DFGGQ), and 487-490 (THSD). The region spanning 591–787 (AINSQKERYI…RTYWRNGVLL (197 aa)) is the COR domain. Positions 800–881 (SKQQQLQQQQ…STLNSQQLIN (82 aa)) are enriched in low complexity. The tract at residues 800–890 (SKQQQLQQQQ…NPSVSPLSST (91 aa)) is disordered. The Protein kinase domain maps to 1026–1292 (IEYEKQIGKG…SYIVKELSEL (267 aa)). Residues 1032–1040 (IGKGGFGLV) and Lys1055 contribute to the ATP site. Asp1154 acts as the Proton acceptor in catalysis. Over residues 1319-1331 (ASTSSNADDGSQT) the composition is skewed to polar residues. The interval 1319 to 1385 (ASTSSNADDG…SSPSTSFINS (67 aa)) is disordered. Residues 1332–1348 (NNNNNNNNNNNNNNNNN) show a composition bias toward low complexity. Polar residues predominate over residues 1349–1364 (SGSSIALSPSRSFEQQ). A compositionally biased stretch (low complexity) spans 1365–1381 (TTTTTTTTTSPSSPSTS). WD repeat units follow at residues 1422 to 1461 (SVHKKMEVLAGVEAGETVWTKSADSSLCFWSTKKGHLINE), 1463 to 1502 (KCPHTVATTMMIKVGKYIWEATNSNGIYIWDMGTMTIVQQ), 1506 to 1546 (PHKG…KKHS), 1589 to 1627 (KHSTGSITSILAMKDEVWSGGSDGRIYIWKVKNEFELQK), 1633 to 1670 (AHHEKITSLIHLEDNVLSGSTDKCISLFKISDPKKPFT), and 1674 to 1714 (HHKQ…EKKT).

Belongs to the protein kinase superfamily. TKL Ser/Thr protein kinase family. ROCO subfamily.

The enzyme catalyses L-seryl-[protein] + ATP = O-phospho-L-seryl-[protein] + ADP + H(+). It carries out the reaction L-threonyl-[protein] + ATP = O-phospho-L-threonyl-[protein] + ADP + H(+). This is Probable serine/threonine-protein kinase roco4 (roco4) from Dictyostelium discoideum (Social amoeba).